Here is a 540-residue protein sequence, read N- to C-terminus: uncharacterized protein (540 aa).

A chloroplast-targeting transit peptide spans 1-58 (MAVSAFRGTRLPLFHHSQFPVARTVSGTSKKMIGARNFKGFVLTAQYSQTQDLFTSRL). The region spanning 195-533 (YVDPTPIASA…ISIASNKRTN (339 aa)) is the Protein kinase domain. ATP is bound by residues 201–209 (IASASIAQV) and K224. D362 acts as the Proton acceptor in catalysis.

The protein belongs to the protein kinase superfamily. ADCK protein kinase family.

It localises to the plastid. The protein localises to the chloroplast. It is found in the plastoglobule. This is an uncharacterized protein from Arabidopsis thaliana (Mouse-ear cress).